We begin with the raw amino-acid sequence, 367 residues long: D-alanine--D-alanine ligase (367 aa).

In terms of domain architecture, ATP-grasp spans 145–351; that stretch reads KRLLRDAGLP…QPALMDELVA (207 aa). 174–229 is a binding site for ATP; the sequence is RAVGSSELFVKPANLGSSVGISKTRDAAEFEAACQLALRFDRKILIERCIAPVREI. Mg(2+) is bound by residues aspartate 306, glutamate 318, and asparagine 320.

This sequence belongs to the D-alanine--D-alanine ligase family. Mg(2+) is required as a cofactor. The cofactor is Mn(2+).

The protein localises to the cytoplasm. It catalyses the reaction 2 D-alanine + ATP = D-alanyl-D-alanine + ADP + phosphate + H(+). It participates in cell wall biogenesis; peptidoglycan biosynthesis. Cell wall formation. In Bradyrhizobium sp. (strain ORS 278), this protein is D-alanine--D-alanine ligase.